The chain runs to 312 residues: Pantothenate synthetase (312 aa).

ATP is bound at residue 42 to 49 (MGALHTGH). Histidine 49 acts as the Proton donor in catalysis. Glutamine 73 contributes to the (R)-pantoate binding site. Glutamine 73 contributes to the beta-alanine binding site. 159–162 (GEKD) serves as a coordination point for ATP. Glutamine 165 is a binding site for (R)-pantoate. ATP-binding positions include valine 188 and 196–199 (LSSR).

This sequence belongs to the pantothenate synthetase family. As to quaternary structure, homodimer.

The protein resides in the cytoplasm. It carries out the reaction (R)-pantoate + beta-alanine + ATP = (R)-pantothenate + AMP + diphosphate + H(+). Its pathway is cofactor biosynthesis; (R)-pantothenate biosynthesis; (R)-pantothenate from (R)-pantoate and beta-alanine: step 1/1. Functionally, catalyzes the condensation of pantoate with beta-alanine in an ATP-dependent reaction via a pantoyl-adenylate intermediate. This chain is Pantothenate synthetase, found in Rhodococcus jostii (strain RHA1).